The sequence spans 344 residues: N-acetyl-gamma-glutamyl-phosphate reductase 1 (344 aa).

C150 is an active-site residue.

Belongs to the NAGSA dehydrogenase family. Type 1 subfamily.

It is found in the cytoplasm. The catalysed reaction is N-acetyl-L-glutamate 5-semialdehyde + phosphate + NADP(+) = N-acetyl-L-glutamyl 5-phosphate + NADPH + H(+). It participates in amino-acid biosynthesis; L-arginine biosynthesis; N(2)-acetyl-L-ornithine from L-glutamate: step 3/4. Functionally, catalyzes the NADPH-dependent reduction of N-acetyl-5-glutamyl phosphate to yield N-acetyl-L-glutamate 5-semialdehyde. The protein is N-acetyl-gamma-glutamyl-phosphate reductase 1 of Pseudomonas putida (strain ATCC 47054 / DSM 6125 / CFBP 8728 / NCIMB 11950 / KT2440).